A 237-amino-acid polypeptide reads, in one-letter code: MILQVQPAKLIKRYKRFLADIELNCGEETTIHCANTGAMKGCAEPDDTVWYTTSTNTKRKYPFSWEITQSQDDHFICVNTLRANQLVEEALHLDLIKELSGFNELKREVKYGNENSRVDFLATYNNAPDTYIEVKSVTLLESGHGYFPDAVTTRGQKHLRELMDMVAQGHKAVLLFAVLHSGINDISAASHVDPIYAKLLKEARLAGVEIIAYKAGFSLQLGELDVKLVEKIPFIER.

The protein belongs to the SfsA family.

This is Sugar fermentation stimulation protein homolog from Colwellia psychrerythraea (strain 34H / ATCC BAA-681) (Vibrio psychroerythus).